A 372-amino-acid polypeptide reads, in one-letter code: N-methyl-L-tryptophan oxidase (372 aa).

4–34 (DLIIIGSGSVGAAAGYYATRAGLNVLMTDAH) contacts FAD. Cys308 is modified (S-8alpha-FAD cysteine).

This sequence belongs to the MSOX/MTOX family. MTOX subfamily. Monomer. FAD is required as a cofactor.

The catalysed reaction is N(alpha)-methyl-L-tryptophan + O2 + H2O = L-tryptophan + formaldehyde + H2O2. In terms of biological role, catalyzes the oxidative demethylation of N-methyl-L-tryptophan. This chain is N-methyl-L-tryptophan oxidase, found in Escherichia coli (strain SMS-3-5 / SECEC).